The following is a 188-amino-acid chain: Putative protein SSX6 (188 aa).

Disordered regions lie at residues 1 to 22 and 74 to 188; these read MNGDDAFAKRPRDDAKASEKRS and KRAT…EDDK. Residues 20 to 83 form the KRAB-related domain; it reads KRSKAFDDIA…KRATDSQRND (64 aa). Composition is skewed to basic and acidic residues over residues 75 to 96 and 112 to 122; these read RATDSQRNDSDNDRNRGNEVER and MPEKPAEEGSD. Ser-123 carries the phosphoserine modification. The span at 147 to 156 shows a compositional bias: basic and acidic residues; it reads SSEKIHERSG. Residues 157-170 are compositionally biased toward basic residues; the sequence is PKRGKHAWTHRLRE. Acidic residues predominate over residues 179-188; it reads EISDPEEDDK.

The protein belongs to the SSX family. Not detected in any normal tissues. Expressed in a melanoma cell line.

Functionally, could act as a modulator of transcription. In Homo sapiens (Human), this protein is Putative protein SSX6.